A 278-amino-acid chain; its full sequence is MPLRTLLCGLLLAVCLGQHALAASRCSERPRTLLRPAEVSCSYQSTWLDSGLVGQRKIIYQTPLGTPPAGGWPVVLIYQGSFFPLNDFSYHSNLPFGGYYEGKLVQNLLDHGYAVIAPSAPADLFWQTNIPGLAQAYELSTDYDFLGNVLAAIASGHFGPLNAQRQYATGISSGGYNTSRMAVSFPGKFRALAVQSGSYATCSGPLCVVPDQLPADHPPTLFLHGFVDAVVPWWSMDLYYDRLLHQGIETARYTEPLGGHEWFAASPGKVLAWFNAHP.

Residues 1–33 (MPLRTLLCGLLLAVCLGQHALAASRCSERPRTL) form the signal peptide.

It is found in the secreted. The catalysed reaction is Hydrolyzes the polyester poly{oxycarbonyl[(R)-2-pentylethylene]} to oligomers.. Its function is as follows. Hydrolysis of poly(3-hydroxyoctanoic acid). In Pseudomonas fluorescens, this protein is Poly(3-hydroxyoctanoate) depolymerase (phaZ).